Reading from the N-terminus, the 139-residue chain is ATP synthase epsilon chain (139 aa).

This sequence belongs to the ATPase epsilon chain family. F-type ATPases have 2 components, CF(1) - the catalytic core - and CF(0) - the membrane proton channel. CF(1) has five subunits: alpha(3), beta(3), gamma(1), delta(1), epsilon(1). CF(0) has three main subunits: a, b and c.

The protein localises to the cell inner membrane. Produces ATP from ADP in the presence of a proton gradient across the membrane. This is ATP synthase epsilon chain from Shigella boydii serotype 18 (strain CDC 3083-94 / BS512).